A 359-amino-acid polypeptide reads, in one-letter code: MASRSFFGALWKSEASRIPPVNLPSVELAVQSNHYCHAQKDSGSHPNSEKQRARRKLYVASAICLVFMIGEIIGGYLAQSLAIMTDAAHLLTDFASMLISLFSLWVSSRPATKTMNFGWQRAEILGALLSVLSIWVVTGVLVYLAVQRLISGDYEIKGDTMLITSGCAVAVNIIMGLALHQSGHGHSHGHSHEDSSQQQQNPSVRAAFIHVVGDLLQSVGVLVAAYIIYFKPEYKYVDPICTFLFSILVLGTTLTILRDVILVLMEGTPKGVDFTTVKNLLLSVDGVEALHSLHIWALTVAQPVLSVHIAIAQNVDAQAVLKVARDRLQGKFNFHTMTIQIESYSEDMKSCQECQGPSE.

Topologically, residues Met-1–Lys-56 are cytoplasmic. Residues His-34–His-37 carry the Mitochondrial localization signal motif. Cys-36 is a Zn(2+) binding site. The chain crosses the membrane as a helical span at residues Leu-57–Leu-77. Residues Ala-78–Asp-86 are Lumenal-facing. The helical transmembrane segment at Ala-87 to Ser-107 threads the bilayer. Residues His-89 and Asp-93 each contribute to the Zn(2+) site. The Cytoplasmic segment spans residues Ser-108–Glu-123. The chain crosses the membrane as a helical span at residues Ile-124–Leu-144. The Lumenal portion of the chain corresponds to Ala-145–Asp-159. A helical membrane pass occupies residues Thr-160–His-180. Over Gln-181–Ala-207 the chain is Cytoplasmic. A helical membrane pass occupies residues Phe-208–Ile-228. The Zn(2+) site is built by His-210 and Asp-214. Residues Tyr-229 to Tyr-236 lie on the Lumenal side of the membrane. A helical transmembrane segment spans residues Val-237–Leu-257. At Arg-258–His-291 the chain is on the cytoplasmic side. Residues Leu-281–Leu-282 carry the Lysosomal targeting motif motif. At Ser-283 the chain carries Phosphoserine. Zn(2+) contacts are provided by His-291, His-308, and Glu-342. The helical transmembrane segment at Ser-292–Ala-312 threads the bilayer. The Lumenal portion of the chain corresponds to Gln-313 to Glu-359.

This sequence belongs to the cation diffusion facilitator (CDF) transporter (TC 2.A.4) family. SLC30A subfamily. In terms of assembly, homodimer. Interacts (via lysosomal targeting motif) with AP3D1; in AP-3-mediated transport to lysosomes. Interacts with TMEM163. In terms of processing, phosphorylated at Ser-283. Phosphorylation at Ser-283 prevents localization to lysosomes. Dephosphorylation of Ser-283 which triggers localization to lysosomes, accumulation of zinc into lysosomes and lysosomal-mediated cell death is induced by TNF-alpha. Detected in intestine, kidney, seminal vesicles and testis.

The protein resides in the cytoplasmic vesicle. It localises to the secretory vesicle membrane. It is found in the zymogen granule membrane. The protein localises to the endosome membrane. Its subcellular location is the lysosome membrane. The protein resides in the mitochondrion inner membrane. The enzyme catalyses Zn(2+)(in) + 2 H(+)(out) = Zn(2+)(out) + 2 H(+)(in). Functionally, electroneutral proton-coupled antiporter concentrating zinc ions into a variety of intracellular organelles including endosomes, zymogen granules and mitochondria. Thereby, plays a crucial role in cellular zinc homeostasis to confer upon cells protection against its potential cytotoxicity. Regulates the zinc concentration of milk, through the transport of zinc ions into secretory vesicles of mammary cells. By concentrating zinc ions into lysosomes participates to lysosomal-mediated cell death during early mammary gland involution. This is Proton-coupled zinc antiporter SLC30A2 from Rattus norvegicus (Rat).